We begin with the raw amino-acid sequence, 86 residues long: Trypsin inhibitor (86 aa).

Intrachain disulfides connect Cys-8–Cys-65 and Cys-49–Cys-58.

Serine protease inhibitor which is active against trypsin. Displays strong antifungal activity against a number of phytopathogenic fungi including M.melonis, A.cucumerina, A.solani, C.glaeosporioides and P.capsici. This Fagopyrum tataricum (Tartarian buckwheat) protein is Trypsin inhibitor.